The sequence spans 141 residues: Phosphoribosyl-AMP cyclohydrolase (141 aa).

D91 is a binding site for Mg(2+). A Zn(2+)-binding site is contributed by C92. 2 residues coordinate Mg(2+): D93 and D95. Zn(2+)-binding residues include C110 and C117.

It belongs to the PRA-CH family. As to quaternary structure, homodimer. Mg(2+) serves as cofactor. The cofactor is Zn(2+).

Its subcellular location is the cytoplasm. It catalyses the reaction 1-(5-phospho-beta-D-ribosyl)-5'-AMP + H2O = 1-(5-phospho-beta-D-ribosyl)-5-[(5-phospho-beta-D-ribosylamino)methylideneamino]imidazole-4-carboxamide. It functions in the pathway amino-acid biosynthesis; L-histidine biosynthesis; L-histidine from 5-phospho-alpha-D-ribose 1-diphosphate: step 3/9. Catalyzes the hydrolysis of the adenine ring of phosphoribosyl-AMP. The sequence is that of Phosphoribosyl-AMP cyclohydrolase from Brucella anthropi (strain ATCC 49188 / DSM 6882 / CCUG 24695 / JCM 21032 / LMG 3331 / NBRC 15819 / NCTC 12168 / Alc 37) (Ochrobactrum anthropi).